We begin with the raw amino-acid sequence, 613 residues long: Protein starmaker (613 aa).

The first 20 residues, 1–20, serve as a signal peptide directing secretion; that stretch reads MLSRTVFVPLILAFVGVSIS. The interval 42–613 is disordered; sequence FTVQFNVGTP…DGRKTSMPIS (572 aa). Composition is skewed to basic and acidic residues over residues 62 to 72, 117 to 132, 147 to 193, 206 to 284, and 291 to 449; these read DGKDSAEKNEA, SAEK…DKPD, DASH…KPEG, SAEK…KSDD, and DEQK…HSDS. Acidic residues predominate over residues 450–465; the sequence is DSDSDSDSDSDSDSDS. Basic and acidic residues-rich tracts occupy residues 467-482, 509-521, and 538-554; these read SNSR…SSES, DKDS…KTDS, and DDSK…TAEK. A compositionally biased stretch (acidic residues) spans 555–573; sequence TDEDSHDVSDDDDDIDAHD. Positions 574-607 are enriched in basic and acidic residues; that stretch reads DEAGVEHGTDEASKPHQEPDHHDDTTHGSDDGRK.

The protein localises to the secreted. In terms of biological role, essential for the formation of otoliths in the inner ear of developing larvae and for the perception of gravity and acceleration. May be one of the organic components of the ortholiths. The protein is Protein starmaker (stm) of Danio rerio (Zebrafish).